A 372-amino-acid polypeptide reads, in one-letter code: Carbamoyl phosphate synthase small chain (372 aa).

Residues methionine 1 to asparagine 182 form a CPSase region. Residues serine 53, glycine 234, and glycine 236 each contribute to the L-glutamine site. One can recognise a Glutamine amidotransferase type-1 domain in the interval threonine 186–alanine 372. Residue cysteine 262 is the Nucleophile of the active site. Positions 263, 266, 304, 306, and 307 each coordinate L-glutamine. Residues histidine 347 and glutamate 349 contribute to the active site.

Belongs to the CarA family. In terms of assembly, composed of two chains; the small (or glutamine) chain promotes the hydrolysis of glutamine to ammonia, which is used by the large (or ammonia) chain to synthesize carbamoyl phosphate. Tetramer of heterodimers (alpha,beta)4.

It carries out the reaction hydrogencarbonate + L-glutamine + 2 ATP + H2O = carbamoyl phosphate + L-glutamate + 2 ADP + phosphate + 2 H(+). The enzyme catalyses L-glutamine + H2O = L-glutamate + NH4(+). It functions in the pathway amino-acid biosynthesis; L-arginine biosynthesis; carbamoyl phosphate from bicarbonate: step 1/1. The protein operates within pyrimidine metabolism; UMP biosynthesis via de novo pathway; (S)-dihydroorotate from bicarbonate: step 1/3. Functionally, small subunit of the glutamine-dependent carbamoyl phosphate synthetase (CPSase). CPSase catalyzes the formation of carbamoyl phosphate from the ammonia moiety of glutamine, carbonate, and phosphate donated by ATP, constituting the first step of 2 biosynthetic pathways, one leading to arginine and/or urea and the other to pyrimidine nucleotides. The small subunit (glutamine amidotransferase) binds and cleaves glutamine to supply the large subunit with the substrate ammonia. The protein is Carbamoyl phosphate synthase small chain of Sulfurisphaera tokodaii (strain DSM 16993 / JCM 10545 / NBRC 100140 / 7) (Sulfolobus tokodaii).